The primary structure comprises 327 residues: Phenylalanine--tRNA ligase alpha subunit (327 aa).

Glu252 contacts Mg(2+).

Belongs to the class-II aminoacyl-tRNA synthetase family. Phe-tRNA synthetase alpha subunit type 1 subfamily. As to quaternary structure, tetramer of two alpha and two beta subunits. Requires Mg(2+) as cofactor.

The protein resides in the cytoplasm. The enzyme catalyses tRNA(Phe) + L-phenylalanine + ATP = L-phenylalanyl-tRNA(Phe) + AMP + diphosphate + H(+). The protein is Phenylalanine--tRNA ligase alpha subunit of Pectobacterium carotovorum subsp. carotovorum (strain PC1).